A 241-amino-acid chain; its full sequence is Phosphoribosylaminoimidazole-succinocarboxamide synthase (241 aa).

Belongs to the SAICAR synthetase family.

It catalyses the reaction 5-amino-1-(5-phospho-D-ribosyl)imidazole-4-carboxylate + L-aspartate + ATP = (2S)-2-[5-amino-1-(5-phospho-beta-D-ribosyl)imidazole-4-carboxamido]succinate + ADP + phosphate + 2 H(+). Its pathway is purine metabolism; IMP biosynthesis via de novo pathway; 5-amino-1-(5-phospho-D-ribosyl)imidazole-4-carboxamide from 5-amino-1-(5-phospho-D-ribosyl)imidazole-4-carboxylate: step 1/2. The polypeptide is Phosphoribosylaminoimidazole-succinocarboxamide synthase (Deinococcus geothermalis (strain DSM 11300 / CIP 105573 / AG-3a)).